The chain runs to 368 residues: tRNA 2-selenouridine synthase (368 aa).

The Rhodanese domain maps to 15–138 (FLNQHPIMDV…MRQYLIGVIE (124 aa)). C98 functions as the S-selanylcysteine intermediate in the catalytic mechanism.

Belongs to the SelU family. In terms of assembly, monomer.

The catalysed reaction is 5-methylaminomethyl-2-thiouridine(34) in tRNA + selenophosphate + (2E)-geranyl diphosphate + H2O + H(+) = 5-methylaminomethyl-2-selenouridine(34) in tRNA + (2E)-thiogeraniol + phosphate + diphosphate. The enzyme catalyses 5-methylaminomethyl-2-thiouridine(34) in tRNA + (2E)-geranyl diphosphate = 5-methylaminomethyl-S-(2E)-geranyl-thiouridine(34) in tRNA + diphosphate. It carries out the reaction 5-methylaminomethyl-S-(2E)-geranyl-thiouridine(34) in tRNA + selenophosphate + H(+) = 5-methylaminomethyl-2-(Se-phospho)selenouridine(34) in tRNA + (2E)-thiogeraniol. It catalyses the reaction 5-methylaminomethyl-2-(Se-phospho)selenouridine(34) in tRNA + H2O = 5-methylaminomethyl-2-selenouridine(34) in tRNA + phosphate. Its function is as follows. Involved in the post-transcriptional modification of the uridine at the wobble position (U34) of tRNA(Lys), tRNA(Glu) and tRNA(Gln). Catalyzes the conversion of 2-thiouridine (S2U-RNA) to 2-selenouridine (Se2U-RNA). Acts in a two-step process involving geranylation of 2-thiouridine (S2U) to S-geranyl-2-thiouridine (geS2U) and subsequent selenation of the latter derivative to 2-selenouridine (Se2U) in the tRNA chain. The chain is tRNA 2-selenouridine synthase from Shewanella baltica (strain OS185).